A 245-amino-acid chain; its full sequence is Orotidine 5'-phosphate decarboxylase (245 aa).

Substrate contacts are provided by residues aspartate 22, lysine 44, aspartate 71 to threonine 80, threonine 131, arginine 192, glutamine 201, glycine 221, and arginine 222. The Proton donor role is filled by lysine 73.

The protein belongs to the OMP decarboxylase family. Type 1 subfamily. Homodimer.

The enzyme catalyses orotidine 5'-phosphate + H(+) = UMP + CO2. The protein operates within pyrimidine metabolism; UMP biosynthesis via de novo pathway; UMP from orotate: step 2/2. Its function is as follows. Catalyzes the decarboxylation of orotidine 5'-monophosphate (OMP) to uridine 5'-monophosphate (UMP). The chain is Orotidine 5'-phosphate decarboxylase from Shigella boydii serotype 18 (strain CDC 3083-94 / BS512).